The primary structure comprises 156 residues: Cytochrome c-type biogenesis protein CcmE (156 aa).

Residues 1 to 8 (MNPLRRKR) are Cytoplasmic-facing. The helical; Signal-anchor for type II membrane protein transmembrane segment at 9–29 (LLIILAILAGVGIAVGLAMSA) threads the bilayer. The Periplasmic portion of the chain corresponds to 30–156 (LRENINLFYT…RIRSLPRRAK (127 aa)). 2 residues coordinate heme: histidine 124 and tyrosine 128.

The protein belongs to the CcmE/CycJ family.

The protein resides in the cell inner membrane. Functionally, heme chaperone required for the biogenesis of c-type cytochromes. Transiently binds heme delivered by CcmC and transfers the heme to apo-cytochromes in a process facilitated by CcmF and CcmH. This Pseudomonas fluorescens protein is Cytochrome c-type biogenesis protein CcmE.